A 407-amino-acid polypeptide reads, in one-letter code: P2X receptor D (407 aa).

Residues 1–22 (MDWDNIFSYNTAKIVTIKDRRL) lie on the Cytoplasmic side of the membrane. The chain crosses the membrane as a helical span at residues 23–43 (GGLHIIFMVLIIVYIVIYSTI). The Lumenal portion of the chain corresponds to 44-300 (YKKGYLLTET…IQNGEIGSFN (257 aa)). The segment at 283-296 (RHGIRLIFIQNGEI) is pore-forming motif. A helical membrane pass occupies residues 301–321 (FQALLLTFVSGLGLLAISTVL). Residues 322 to 407 (VDQLAIRFLP…QNIQNNNIIL (86 aa)) are Cytoplasmic-facing. The segment at 371-394 (KNNENNNNNDDYNDDDNEIFDDNN) is disordered. Positions 381–391 (DYNDDDNEIFD) are enriched in acidic residues.

This sequence belongs to the P2X receptor family.

The protein resides in the contractile vacuole membrane. Functionally, P2X receptors are ligand-gated ion channels that play a role in intracellular calcium signaling. ATP does not evoke inward currents in p2xD. Not essential for osmoregulation. This Dictyostelium discoideum (Social amoeba) protein is P2X receptor D (p2xD).